The chain runs to 83 residues: Mitochondrial import inner membrane translocase subunit Tim8 B (83 aa).

A2 carries the N-acetylalanine modification. The Twin CX3C motif signature appears at 36–59 (CWDKCVEKPGSRLDSRTENCLSSC). Disulfide bonds link C36-C59 and C40-C55.

It belongs to the small Tim family. Heterohexamer; possibly composed of 3 copies of TIMM8B and 3 copies of TIMM13, named soluble 70 kDa complex. Associates with the TIM22 complex, whose core is composed of TIMM22.

The protein resides in the mitochondrion inner membrane. Its function is as follows. Probable mitochondrial intermembrane chaperone that participates in the import and insertion of some multi-pass transmembrane proteins into the mitochondrial inner membrane. Also required for the transfer of beta-barrel precursors from the TOM complex to the sorting and assembly machinery (SAM complex) of the outer membrane. Acts as a chaperone-like protein that protects the hydrophobic precursors from aggregation and guide them through the mitochondrial intermembrane space. The polypeptide is Mitochondrial import inner membrane translocase subunit Tim8 B (Timm8b) (Mus musculus (Mouse)).